A 344-amino-acid polypeptide reads, in one-letter code: Phosphoribosylformylglycinamidine cyclo-ligase (344 aa).

It belongs to the AIR synthase family.

It localises to the cytoplasm. The enzyme catalyses 2-formamido-N(1)-(5-O-phospho-beta-D-ribosyl)acetamidine + ATP = 5-amino-1-(5-phospho-beta-D-ribosyl)imidazole + ADP + phosphate + H(+). Its pathway is purine metabolism; IMP biosynthesis via de novo pathway; 5-amino-1-(5-phospho-D-ribosyl)imidazole from N(2)-formyl-N(1)-(5-phospho-D-ribosyl)glycinamide: step 2/2. The protein is Phosphoribosylformylglycinamidine cyclo-ligase of Neisseria meningitidis serogroup C / serotype 2a (strain ATCC 700532 / DSM 15464 / FAM18).